The chain runs to 322 residues: MADVLTELPGVGPSTADKLIEGGYLDFMKIATATIGELTDIEGISEKAAAKMIMAARDLCDLGFKSGVELLKQRQSVWRLSTGSTELDTVLAGGIESQSVTEFAGMFGSGKTQIMHQTCVNLQIREKIFADLEGVVEEELEAPKAVYIDTEGTFRPERVVQMAEGAGIDGQTVLDNTFVARAYNSDMQMLFAEKIEDLIKGGNNIKLVIIDSLTSTFRNEFTGRGKLAERQQKLGRHMATLNKLADLYNCIVLVTNQVAAKPDAYFGVAEQAIGGHVVGHAATFRFFLRKSKGDKRVAKLYDSPHLPDSEAVFRITEKGIQD.

An ATP-binding site is contributed by 105 to 112 (GMFGSGKT).

The protein belongs to the eukaryotic RecA-like protein family.

Involved in DNA repair and in homologous recombination. Binds and assemble on single-stranded DNA to form a nucleoprotein filament. Hydrolyzes ATP in a ssDNA-dependent manner and promotes DNA strand exchange between homologous DNA molecules. The protein is DNA repair and recombination protein RadA of Methanococcus maripaludis (strain DSM 14266 / JCM 13030 / NBRC 101832 / S2 / LL).